The following is a 150-amino-acid chain: Transthyretin (150 aa).

Residues 1–20 form the signal peptide; sequence MASYRLLLLCLAGLVFVSEA. Position 30 is a sulfocysteine (cysteine 30). L-thyroxine is bound at residue lysine 35. Position 62 is a 4-carboxyglutamate (glutamate 62). An L-thyroxine-binding site is contributed by glutamate 74. Asparagine 118 carries an N-linked (GlcNAc...) asparagine glycan. Serine 137 contacts L-thyroxine.

Belongs to the transthyretin family. As to quaternary structure, homotetramer. Dimer of dimers. In the homotetramer, subunits assemble around a central channel that can accommodate two ligand molecules. Interacts with RBP4. Sulfonation of the reactive cysteine Cys-30 enhances the stability of the native conformation of TTR, avoiding misassembly of the protein leading to amyloid formation. Detected in plasma and cerebrospinal fluid (at protein level). Highly expressed in the choroid plexus. Detected in liver.

The protein localises to the secreted. Its function is as follows. Thyroid hormone-binding protein. Probably transports thyroxine from the bloodstream to the brain. The polypeptide is Transthyretin (TTR) (Sus scrofa (Pig)).